The following is an 817-amino-acid chain: MSGTQNNDMKRQFLLERLLDAVKQCQIRFGGRKEIASDSDSRVTCLCAQFEAVLQHGLKRSRGLALTAAAIKQAAGFASKTETEPVFWFYVKEVLSKHELQRFHALRHIASDVGRGRAWLRCALNENSLERYLHMLLADRGRLSTFYEDWAFVMDEERSSMLPTMAAGLNSILFAINIDNKDLNGQSKFAPTVSDLLKESTQNVTSLLKESTQGVSSLFREITASSAVSILSRAEQETDPLPVVSKHVSADAKCKRERKKKKKVTNIISFDDEEDEQSSGDVFKKIPGAGESSEENSDRSSINIMSAFESPFGPNSNGSQGSNSWKIDSLSLNGEFGYQKLDVKSIDDEDADENEDDVCGSMPGRKRPGHSESPEKPLDAGTCLSQMHGWAPLQVLHGHAEVLFPVSGVGSYGPADAPLGSLENGTGPEDHILPEPGPRYSVEASPPGQESPLSSLLPSASVPESMTVSDLRQAIVAMMNRKDELEEENRSLRNLLDGEMEHSAALRQEVDTLKRKVAEQEERHVTKVQALARENEVLKVQLKKYVGAVQMLKREGQTAEVVPNLWNIDGEVTVPEQKPGEVAEELTSSYERKLIEVAEMHGELIEFNERLHRALVAKEALVSQMRQELIDLRGPVPGDLSQTSEDQSLSDFEISNRALINVWIPSVFLRGKAANAFHVYQVYIRIKDDEWNVYRRYAEFRTLHHKLQNKYPQVRAFNFPPKKAIGNKDAKFVEERRKQLQTYLRSVMNKVIQAVPEFTASPQKETLTQLMPFFVDITPPGDALTKNSRPKVASRFPKLARGHPRETRNVEPQSGDL.

The RUN domain maps to 37-181; the sequence is SDSDSRVTCL…ILFAINIDNK (145 aa). Ser-269, Ser-292, Ser-293, Ser-331, and Ser-345 each carry phosphoserine. The interval 271–299 is disordered; it reads DDEEDEQSSGDVFKKIPGAGESSEENSDR. Disordered stretches follow at residues 344–381 and 417–460; these read KSIDDEDADENEDDVCGSMPGRKRPGHSESPEKPLDAG and APLG…LPSA. Acidic residues predominate over residues 347–358; that stretch reads DDEDADENEDDV. A compositionally biased stretch (basic and acidic residues) spans 369-378; the sequence is GHSESPEKPL. The segment covering 445–460 has biased composition (low complexity); the sequence is SPPGQESPLSSLLPSA. Residue Ser-451 is modified to Phosphoserine. Residues 466-546 are a coiled coil; it reads MTVSDLRQAI…VLKVQLKKYV (81 aa). Ser-641 is subject to Phosphoserine. Thr-643 bears the Phosphothreonine mark. Phosphoserine is present on residues Ser-644 and Ser-648. A PX domain is found at 658-781; sequence ALINVWIPSV…PFFVDITPPG (124 aa). The interval 784–817 is disordered; sequence LTKNSRPKVASRFPKLARGHPRETRNVEPQSGDL.

It belongs to the sorting nexin family.

The polypeptide is Sorting nexin-29 (SNX29) (Bos taurus (Bovine)).